We begin with the raw amino-acid sequence, 201 residues long: Inosine triphosphate pyrophosphatase (201 aa).

13-18 (TGNAKK) is an ITP binding site. Position 43 (glutamate 43) interacts with Mg(2+). ITP contacts are provided by residues lysine 55, 71–72 (DT), lysine 88, 148–151 (FGWD), lysine 171, and 176–177 (HR).

This sequence belongs to the HAM1 NTPase family. As to quaternary structure, homodimer. Requires Mg(2+) as cofactor. Mn(2+) is required as a cofactor.

The protein resides in the cytoplasm. The catalysed reaction is ITP + H2O = IMP + diphosphate + H(+). The enzyme catalyses dITP + H2O = dIMP + diphosphate + H(+). It carries out the reaction XTP + H2O = XMP + diphosphate + H(+). It catalyses the reaction N(6)-hydroxy-dATP + H2O = N(6)-hydroxy-dAMP + diphosphate + H(+). Functionally, pyrophosphatase that hydrolyzes the non-canonical purine nucleotides inosine triphosphate (ITP), deoxyinosine triphosphate (dITP) as well as 2'-deoxy-N-6-hydroxylaminopurine triphosphate (dHAPTP) and xanthosine 5'-triphosphate (XTP) to their respective monophosphate derivatives. The enzyme does not distinguish between the deoxy- and ribose forms. Probably excludes non-canonical purines from RNA and DNA precursor pools, thus preventing their incorporation into RNA and DNA and avoiding chromosomal lesions. In Gallus gallus (Chicken), this protein is Inosine triphosphate pyrophosphatase.